We begin with the raw amino-acid sequence, 311 residues long: Ribosomal RNA small subunit methyltransferase H (311 aa).

Residues 32–34 (AGH), aspartate 52, phenylalanine 79, aspartate 100, and glutamine 107 each bind S-adenosyl-L-methionine.

Belongs to the methyltransferase superfamily. RsmH family.

The protein localises to the cytoplasm. It catalyses the reaction cytidine(1402) in 16S rRNA + S-adenosyl-L-methionine = N(4)-methylcytidine(1402) in 16S rRNA + S-adenosyl-L-homocysteine + H(+). Functionally, specifically methylates the N4 position of cytidine in position 1402 (C1402) of 16S rRNA. This chain is Ribosomal RNA small subunit methyltransferase H, found in Staphylococcus carnosus (strain TM300).